Consider the following 830-residue polypeptide: Ribosome biogenesis protein ERB1 (830 aa).

The disordered stretch occupies residues 1–141 (MAPQPLKVGT…ENKDLPVDEK (141 aa)). Acidic residues-rich tracts occupy residues 35–44 (VSEESDEEFG) and 52–109 (MSDD…DSDS). The segment covering 131 to 141 (EENKDLPVDEK) has biased composition (basic and acidic residues). 6 WD repeats span residues 481–520 (PGDT…EVWR), 523–563 (LHAG…APHI), 660–698 (KTPG…LIRT), 701–740 (SGVK…KPYK), 744–783 (YHNR…DLMQ), and 799–830 (IDGI…LWCS).

Belongs to the WD repeat BOP1/ERB1 family. As to quaternary structure, component of the NOP7 complex, composed of ERB1, NOP7 and YTM1. The complex is held together by ERB1, which interacts with NOP7 via its N-terminal domain and with YTM1 via a high-affinity interaction between the seven-bladed beta-propeller domains of the 2 proteins. The NOP7 complex associates with the 66S pre-ribosome.

It is found in the nucleus. It localises to the nucleolus. The protein resides in the nucleoplasm. Component of the NOP7 complex, which is required for maturation of the 25S and 5.8S ribosomal RNAs and formation of the 60S ribosome. The protein is Ribosome biogenesis protein ERB1 of Cryptococcus neoformans var. neoformans serotype D (strain B-3501A) (Filobasidiella neoformans).